The following is a 142-amino-acid chain: Small ribosomal subunit protein bS16 (142 aa).

Positions 101–142 are disordered; the sequence is RPSFDALGGDDAGKGEAITQKKKAEKKDEAAAESSSSESTEA. Low complexity predominate over residues 132-142; it reads AESSSSESTEA.

The protein belongs to the bacterial ribosomal protein bS16 family.

This is Small ribosomal subunit protein bS16 from Streptomyces avermitilis (strain ATCC 31267 / DSM 46492 / JCM 5070 / NBRC 14893 / NCIMB 12804 / NRRL 8165 / MA-4680).